A 183-amino-acid chain; its full sequence is Orotate phosphoribosyltransferase (183 aa).

5-phospho-alpha-D-ribose 1-diphosphate contacts are provided by residues arginine 90, lysine 91, lysine 94, and 115–123 (DDVATTGGS). 2 residues coordinate orotate: threonine 119 and arginine 147.

Belongs to the purine/pyrimidine phosphoribosyltransferase family. PyrE subfamily. In terms of assembly, homodimer. Requires Mg(2+) as cofactor.

It carries out the reaction orotidine 5'-phosphate + diphosphate = orotate + 5-phospho-alpha-D-ribose 1-diphosphate. The protein operates within pyrimidine metabolism; UMP biosynthesis via de novo pathway; UMP from orotate: step 1/2. In terms of biological role, catalyzes the transfer of a ribosyl phosphate group from 5-phosphoribose 1-diphosphate to orotate, leading to the formation of orotidine monophosphate (OMP). In Methanopyrus kandleri (strain AV19 / DSM 6324 / JCM 9639 / NBRC 100938), this protein is Orotate phosphoribosyltransferase.